A 130-amino-acid chain; its full sequence is uncharacterized protein (130 aa).

The signal sequence occupies residues 1–19; sequence MLAPLFLCCLRNLFRKLIS.

Its subcellular location is the secreted. This is an uncharacterized protein from Homo sapiens (Human).